Here is a 405-residue protein sequence, read N- to C-terminus: Acetate kinase (405 aa).

Mg(2+) is bound at residue N7. K14 contributes to the ATP binding site. R92 lines the substrate pocket. The active-site Proton donor/acceptor is D149. ATP-binding positions include 209-213 (HLGNG) and 284-286 (DMR). Residue E389 coordinates Mg(2+).

Belongs to the acetokinase family. As to quaternary structure, homodimer. Mg(2+) is required as a cofactor. Requires Mn(2+) as cofactor.

It localises to the cytoplasm. It catalyses the reaction acetate + ATP = acetyl phosphate + ADP. The protein operates within metabolic intermediate biosynthesis; acetyl-CoA biosynthesis; acetyl-CoA from acetate: step 1/2. In terms of biological role, catalyzes the formation of acetyl phosphate from acetate and ATP. Can also catalyze the reverse reaction. The polypeptide is Acetate kinase (Borrelia garinii subsp. bavariensis (strain ATCC BAA-2496 / DSM 23469 / PBi) (Borreliella bavariensis)).